Consider the following 720-residue polypeptide: MSASDLTSVQAAAPQGDRQILVTSALPYANGQIHIGHLVEYIQTDIWVRTLRMHGHEVYYIGADDTHGTPIMLRAEKEGLTPKQLIDRVWTEHKRDFDSFGVSFDNFYSTDSDENRVLSEKIYVALQDAGFIAEREIEQAYDPVKEMFLPDRFIKGECPKCHAKDQYGDNCEVCGSTYLPTELLNPYSVVSGATPVRKTSKHYFFRLSDPRCETFLREWVSGLAQPEATNKMREWLGDAGEAKLADWDISRDAPYFGFEIPGAPGKYFYVWLDAPVGYYASFKNLCDRNGVDFDAWVRPGSTTEQYHFIGKDILYFHTLFWPAMLEFSGHRTPTNVFAHGFLTVDGAKMSKSRGTFITAQSYIDTGLNPEWLRYYFAAKLNATMEDIDLNLDDFQARVNSDLVGKYVNIASRAAGFLIKRFDGRVQDSAMNHPLVAKLREAIPQIAAHYEAREYGRALRHTMELADEVNAYVDGAKPWDLAKDPANAVALHETCSVSLESFRLLSLALKPVMPRVAEAVESFFGIAPLAWSDAAKPLSSEQPIKAYQHLMTRVDPKQIEALLAANRDSLQAEATGAAVATANAAKDAKNSAKANANAKQAVVNGADDAPISIDDFAKIDLRIAKIVACQAVEGSDKLLQLTLDVGEEKTRNVFSGIKSAYQPEQLVGKLTVMVANLAPRKMKFGLSEGMVLAASATDEKAEPGLYILEPHSGAKPGMRVK.

Residues 27-37 (PYANGQIHIGH) carry the 'HIGH' region motif. Zn(2+)-binding residues include Cys-158, Cys-161, Cys-171, and Cys-174. The short motif at 348-352 (KMSKS) is the 'KMSKS' region element. ATP is bound at residue Lys-351. The tRNA-binding domain occupies 614 to 720 (DFAKIDLRIA…SGAKPGMRVK (107 aa)).

It belongs to the class-I aminoacyl-tRNA synthetase family. MetG type 1 subfamily. As to quaternary structure, homodimer. Requires Zn(2+) as cofactor.

Its subcellular location is the cytoplasm. It carries out the reaction tRNA(Met) + L-methionine + ATP = L-methionyl-tRNA(Met) + AMP + diphosphate. Is required not only for elongation of protein synthesis but also for the initiation of all mRNA translation through initiator tRNA(fMet) aminoacylation. The protein is Methionine--tRNA ligase of Burkholderia lata (strain ATCC 17760 / DSM 23089 / LMG 22485 / NCIMB 9086 / R18194 / 383).